We begin with the raw amino-acid sequence, 470 residues long: Chitin deacetylase 1 (470 aa).

The first 19 residues, 1–19, serve as a signal peptide directing secretion; that stretch reads MFTFAAFSALLISLAGVVA. Asn-101 and Asn-121 each carry an N-linked (GlcNAc...) asparagine glycan. The cysteines at positions 155 and 363 are disulfide-linked. Residues 159-358 form the NodB homology domain; it reads NVWGLSYDDG…VLANGTYQLK (200 aa). Catalysis depends on Asp-166, which acts as the Proton acceptor. Asp-166 provides a ligand contact to acetate. Asp-167, His-216, and His-220 together coordinate Co(2+). Position 257 (Tyr-257) interacts with acetate. Residue His-331 is the Proton donor of the active site. Asn-352, Asn-378, and Asn-440 each carry an N-linked (GlcNAc...) asparagine glycan. Residues 406–447 form a disordered region; that stretch reads EVSAPSEATGSTAAGSAASTTSGSGASASTGAASNTSSSGSG. The span at 408–447 shows a compositional bias: low complexity; the sequence is SAPSEATGSTAAGSAASTTSGSGASASTGAASNTSSSGSG. Ser-444 is lipidated: GPI-anchor amidated serine. Residues 445–470 constitute a propeptide, removed in mature form; it reads GSGRSATMGGALIALAAVAVGMVYVA.

The protein belongs to the polysaccharide deacetylase family. It depends on Co(2+) as a cofactor.

The protein resides in the secreted. It is found in the cell wall. The protein localises to the cell membrane. The enzyme catalyses [(1-&gt;4)-N-acetyl-beta-D-glucosaminyl](n) + n H2O = chitosan + n acetate. Functionally, hydrolyzes the N-acetamido groups of N-acetyl-D-glucosamine residues in chitin to form chitosan and acetate. Chitosan is required to anchor melanin to the cell wall, for maintenance of cell wall integrity, and for proper cytokinesis. Plays a major role in synthesizing cell wall chitosan during host infection; chitosan offers an advantage during infection as it is less readily detected than chitin by host immunosurveillance mechanisms. The polypeptide is Chitin deacetylase 1 (Cryptococcus neoformans var. grubii serotype A (strain H99 / ATCC 208821 / CBS 10515 / FGSC 9487) (Filobasidiella neoformans var. grubii)).